A 267-amino-acid chain; its full sequence is Neutrophil elastase (267 aa).

Residues 1–27 (MTLGRRLACLFLACVLPALLLGGTALA) form the signal peptide. A propeptide spanning residues 28–29 (SE) is cleaved from the precursor. Positions 30–247 (IVGGRRARPH…FVNWIDSIIQ (218 aa)) constitute a Peptidase S1 domain. Cys-55 and Cys-71 are disulfide-bonded. Residue His-70 is the Charge relay system of the active site. Residue Asn-88 is glycosylated (N-linked (GlcNAc...) asparagine). Residue Asp-117 is the Charge relay system of the active site. 2 N-linked (GlcNAc...) asparagine glycosylation sites follow: Asn-124 and Asn-173. 3 cysteine pairs are disulfide-bonded: Cys-151-Cys-208, Cys-181-Cys-187, and Cys-198-Cys-223. Ser-202 (charge relay system) is an active-site residue.

It belongs to the peptidase S1 family. Elastase subfamily. As to quaternary structure, interacts with NOTCH2NL. Interacts with agaphelin, an antihemostatic protein from Anopheles gambiae. As to expression, bone marrow cells. Neutrophil.

The protein resides in the cytoplasmic vesicle. The protein localises to the phagosome. It carries out the reaction Hydrolysis of proteins, including elastin. Preferential cleavage: Val-|-Xaa &gt; Ala-|-Xaa.. Its function is as follows. Serine protease that modifies the functions of natural killer cells, monocytes and granulocytes. Inhibits C5a-dependent neutrophil enzyme release and chemotaxis. Promotes cleavage of GSDMB, thereby inhibiting pyroptosis. Promotes blood coagulation. Through the activation of the platelet fibrinogen receptor integrin alpha-IIb/beta-3, potentiates platelet aggregation induced by a threshold concentration of cathepsin G (CTSG). Cleaves and thus inactivates tissue factor pathway inhibitor (TFPI). Capable of killing E.coli but not S.aureus in vitro; digests outer membrane protein A (ompA) in E.coli and K.pneumoniae. This Homo sapiens (Human) protein is Neutrophil elastase (ELANE).